We begin with the raw amino-acid sequence, 84 residues long: Small ribosomal subunit protein uS17 (84 aa).

This sequence belongs to the universal ribosomal protein uS17 family. In terms of assembly, part of the 30S ribosomal subunit.

One of the primary rRNA binding proteins, it binds specifically to the 5'-end of 16S ribosomal RNA. The sequence is that of Small ribosomal subunit protein uS17 from Moorella thermoacetica (strain ATCC 39073 / JCM 9320).